A 175-amino-acid chain; its full sequence is Nucleoside triphosphate/diphosphate phosphatase (175 aa).

R23 functions as the Proton donor in the catalytic mechanism. 6 residues coordinate Mg(2+): N87, D103, D105, D107, D120, and E123.

This sequence belongs to the Ntdp family. Mg(2+) serves as cofactor.

The catalysed reaction is a ribonucleoside 5'-triphosphate + H2O = a ribonucleoside 5'-diphosphate + phosphate + H(+). It carries out the reaction a ribonucleoside 5'-diphosphate + H2O = a ribonucleoside 5'-phosphate + phosphate + H(+). Functionally, has nucleoside phosphatase activity towards nucleoside triphosphates and nucleoside diphosphates. The chain is Nucleoside triphosphate/diphosphate phosphatase from Halalkalibacterium halodurans (strain ATCC BAA-125 / DSM 18197 / FERM 7344 / JCM 9153 / C-125) (Bacillus halodurans).